The sequence spans 441 residues: UPF0761 membrane protein Clim_1521 (441 aa).

The next 6 membrane-spanning stretches (helical) occupy residues 54-74 (IFLS…PFLA), 122-142 (TVPL…ISTI), 161-181 (AFTL…SSLG), 203-223 (LISF…YMLV), 233-253 (AFSG…WFVF), and 266-286 (GAIS…LVVL).

Belongs to the UPF0761 family.

Its subcellular location is the cell inner membrane. The chain is UPF0761 membrane protein Clim_1521 from Chlorobium limicola (strain DSM 245 / NBRC 103803 / 6330).